The chain runs to 383 residues: Mannan endo-1,4-beta-mannosidase A (383 aa).

The first 18 residues, 1–18 (MKFSQALLSLASLALAAA), serve as a signal peptide directing secretion. N75 carries N-linked (GlcNAc...) asparagine glycosylation. A substrate-binding site is contributed by W97. An N-linked (GlcNAc...) asparagine glycan is attached at N199. Substrate contacts are provided by residues N210 and 211 to 213 (EPR). The active-site Proton donor/acceptor is E211. Cysteines 214 and 217 form a disulfide. Positions 279 and 283 each coordinate substrate. C301 and C308 form a disulfide bridge. E312 (nucleophile) is an active-site residue. C320 and C369 are joined by a disulfide. N332 carries N-linked (GlcNAc...) asparagine glycosylation. Position 342 (W342) interacts with substrate.

The protein belongs to the glycosyl hydrolase 5 (cellulase A) family. In terms of assembly, monomer.

It is found in the secreted. It catalyses the reaction Random hydrolysis of (1-&gt;4)-beta-D-mannosidic linkages in mannans, galactomannans and glucomannans.. Endo-1,4-mannanase that catalyzes the random hydrolysis of (1-&gt;4)-beta-D-mannosidic linkages in mannans and heteromannans. It is a crucial enzyme for depolymerization of seed galactomannans and wood galactoglucomannans. Active against locust bean gum and gum guar. Also has transglycosylation activity. This is Mannan endo-1,4-beta-mannosidase A (manA) from Emericella nidulans (strain FGSC A4 / ATCC 38163 / CBS 112.46 / NRRL 194 / M139) (Aspergillus nidulans).